Consider the following 77-residue polypeptide: Small ribosomal subunit protein uS17c (77 aa).

Belongs to the universal ribosomal protein uS17 family. As to quaternary structure, part of the 30S ribosomal subunit.

It is found in the plastid. The protein localises to the chloroplast. Its function is as follows. One of the primary rRNA binding proteins, it binds specifically to the 5'-end of 16S ribosomal RNA. This Cyanidium caldarium (Red alga) protein is Small ribosomal subunit protein uS17c (rps17).